The sequence spans 220 residues: Chloramphenicol acetyltransferase (220 aa).

The active-site Proton acceptor is histidine 187.

Belongs to the chloramphenicol acetyltransferase family. Homotrimer.

The enzyme catalyses chloramphenicol + acetyl-CoA = chloramphenicol 3-acetate + CoA. In terms of biological role, this enzyme is an effector of chloramphenicol resistance in bacteria. This Bacillus pumilus (Bacillus mesentericus) protein is Chloramphenicol acetyltransferase (cat86).